The sequence spans 141 residues: Nucleoside diphosphate kinase (141 aa).

K9, F57, R85, T91, R102, and N112 together coordinate ATP. The active-site Pros-phosphohistidine intermediate is H115.

Belongs to the NDK family. As to quaternary structure, homotetramer. Requires Mg(2+) as cofactor.

It localises to the cytoplasm. The catalysed reaction is a 2'-deoxyribonucleoside 5'-diphosphate + ATP = a 2'-deoxyribonucleoside 5'-triphosphate + ADP. It carries out the reaction a ribonucleoside 5'-diphosphate + ATP = a ribonucleoside 5'-triphosphate + ADP. Functionally, major role in the synthesis of nucleoside triphosphates other than ATP. The ATP gamma phosphate is transferred to the NDP beta phosphate via a ping-pong mechanism, using a phosphorylated active-site intermediate. This Prosthecochloris aestuarii (strain DSM 271 / SK 413) protein is Nucleoside diphosphate kinase.